Reading from the N-terminus, the 319-residue chain is Beta-xylosidase (319 aa).

Asp14 (proton acceptor) is an active-site residue. Catalysis depends on Glu222, which acts as the Proton donor.

The protein belongs to the glycosyl hydrolase 43 family.

It catalyses the reaction Hydrolysis of (1-&gt;4)-beta-D-xylans, to remove successive D-xylose residues from the non-reducing termini.. In terms of biological role, exoxylanase capable of acting on certain xylans and xylooligosaccharides. This is Beta-xylosidase (xynB) from Xylanibacter ruminicola (Prevotella ruminicola).